We begin with the raw amino-acid sequence, 345 residues long: MSKNIKLTSLTKNSGCAAKIGPGVLHSVLSSLPKFEDENLIVGFDTSDDACVYKINDDTVVIKTVDFFPPMVDDPYTFGQVAAANALSDVYAMGGNPSIAMNLICFPSCLDISIMREILAGGYDKVKEAGAVIAGGHTIADPTPKYGLCVSGFARPEEILSNSNAKIGDVIILTKPLGIGIMNTAAKAELIGENKIKEVTSIMSTLNKYAKECTSGLEIHSCTDVTGFGLIGHGYEMASGSKKTIEIFSEYVPIIDGALDYAKMGIIPEGMYNNLDYLKDKFVVEANISQELQDVLIDPQTSGGLLLSLPEKHAKEFLSRIEKFTPYAKIIGQVLDKGDKPIVIK.

C16 is an active-site residue. ATP contacts are provided by residues K19 and 46–48; that span reads TSD. Mg(2+) is bound at residue D49. Residues D66, D89, and 136-138 contribute to the ATP site; that span reads GHT. D89 lines the Mg(2+) pocket. Position 224 (D224) interacts with Mg(2+).

Belongs to the selenophosphate synthase 1 family. Class I subfamily. As to quaternary structure, homodimer. It depends on Mg(2+) as a cofactor.

It carries out the reaction hydrogenselenide + ATP + H2O = selenophosphate + AMP + phosphate + 2 H(+). Synthesizes selenophosphate from selenide and ATP. This Clostridium botulinum (strain Alaska E43 / Type E3) protein is Selenide, water dikinase.